A 460-amino-acid chain; its full sequence is MEIHLFNEIGKVTDGPFMVHVALSTYRFDLGQIDMLFIRSVFLHNKHISCWIRIPFNIRNVDVDLHRYFSFKPKRKNERTIILARPVVFFSLPLLSPGIDNNKLAVEAMCICRFVNTNGAEFFDLEFMYEDILREFPDVGDECIKEDDHVDDFFTLGACSSATVGTVQNSTGQDHRSPVNDNNEHTVTPGPLEPPSVVRGVDSNSGNGLNNMTPGKCNGYPTGKHVWKAIDIYRLQPLHTPSDNVYRVLYDKSSFLKPRISQPPYDGLASCFFLRHEVYRFMRVIGTEIIDKFFDVMNSEDGILFQKFLCHVPMNALDISIPEMVYLSQNVWTSHVDPRSCIIKGVVAHLFKNPRRPCFVGSLTENEYWVDVIDIRQNRIYYGQKIKLAVDQETNLLTCNDKSRRYEQRAGLSVLYINTDLCCIWSFTGGFAVEFRLTLEDIGNVDLIRAVFGAPSTLFE.

Positions 167 to 197 are disordered; it reads VQNSTGQDHRSPVNDNNEHTVTPGPLEPPSV. Residues 173–184 show a composition bias toward basic and acidic residues; it reads QDHRSPVNDNNE.

The protein belongs to the herpesviridae CVC1 protein family. In terms of assembly, interacts (via C-terminus) with capsid vertex component 2/CVC2.

The protein resides in the virion. Its subcellular location is the host nucleus. In terms of biological role, capsid vertex-specific component that plays a role during viral DNA encapsidation, assuring correct genome cleavage and presumably stabilizing capsids that contain full-length viral genomes. The sequence is that of Capsid vertex component 1 from Elephantid herpesvirus 1 (isolate Asian elephant/Berlin/Kiba/1998) (EIHV-1).